A 328-amino-acid chain; its full sequence is Cytochrome c biogenesis protein CcsA (328 aa).

8 helical membrane-spanning segments follow: residues 13-33, 46-66, 73-93, 101-121, 146-166, 234-254, 263-283, and 295-315; these read ISFS…LVNL, GIII…IYSG, LYES…VSYF, LNAI…SGLL, MILG…LLVI, IISL…VWAN, WDPK…YLHI, and AIVA…VNLL.

The protein belongs to the CcmF/CycK/Ccl1/NrfE/CcsA family. May interact with Ccs1.

It is found in the plastid. The protein localises to the chloroplast thylakoid membrane. In terms of biological role, required during biogenesis of c-type cytochromes (cytochrome c6 and cytochrome f) at the step of heme attachment. The sequence is that of Cytochrome c biogenesis protein CcsA from Capsella bursa-pastoris (Shepherd's purse).